The sequence spans 427 residues: 3-phosphoshikimate 1-carboxyvinyltransferase (427 aa).

3-phosphoshikimate-binding residues include lysine 22, serine 23, and arginine 27. Position 22 (lysine 22) interacts with phosphoenolpyruvate. Phosphoenolpyruvate is bound by residues glycine 96 and arginine 124. Residues serine 169, serine 170, glutamine 171, serine 197, aspartate 313, asparagine 336, and lysine 340 each contribute to the 3-phosphoshikimate site. A phosphoenolpyruvate-binding site is contributed by glutamine 171. The Proton acceptor role is filled by aspartate 313. Residues arginine 344, arginine 386, and lysine 411 each contribute to the phosphoenolpyruvate site.

It belongs to the EPSP synthase family. Monomer.

Its subcellular location is the cytoplasm. It catalyses the reaction 3-phosphoshikimate + phosphoenolpyruvate = 5-O-(1-carboxyvinyl)-3-phosphoshikimate + phosphate. It functions in the pathway metabolic intermediate biosynthesis; chorismate biosynthesis; chorismate from D-erythrose 4-phosphate and phosphoenolpyruvate: step 6/7. Functionally, catalyzes the transfer of the enolpyruvyl moiety of phosphoenolpyruvate (PEP) to the 5-hydroxyl of shikimate-3-phosphate (S3P) to produce enolpyruvyl shikimate-3-phosphate and inorganic phosphate. This is 3-phosphoshikimate 1-carboxyvinyltransferase from Citrobacter koseri (strain ATCC BAA-895 / CDC 4225-83 / SGSC4696).